A 389-amino-acid polypeptide reads, in one-letter code: Cellobiose 2-epimerase (389 aa).

The protein belongs to the cellobiose 2-epimerase family.

The enzyme catalyses D-cellobiose = beta-D-glucosyl-(1-&gt;4)-D-mannopyranose. Functionally, catalyzes the reversible epimerization of cellobiose to 4-O-beta-D-glucopyranosyl-D-mannose (Glc-Man). The chain is Cellobiose 2-epimerase from Ruminococcus albus (strain ATCC 27210 / DSM 20455 / JCM 14654 / NCDO 2250 / 7).